The chain runs to 243 residues: Small ribosomal subunit protein eS4 (243 aa).

The region spanning 37–99 (IPLALLLKHY…SDLYFRIVPD (63 aa)) is the S4 RNA-binding domain.

The protein belongs to the eukaryotic ribosomal protein eS4 family.

The polypeptide is Small ribosomal subunit protein eS4 (rps4e) (Sulfurisphaera tokodaii (strain DSM 16993 / JCM 10545 / NBRC 100140 / 7) (Sulfolobus tokodaii)).